Consider the following 208-residue polypeptide: Imidazoleglycerol-phosphate dehydratase (208 aa).

This sequence belongs to the imidazoleglycerol-phosphate dehydratase family.

It localises to the cytoplasm. It catalyses the reaction D-erythro-1-(imidazol-4-yl)glycerol 3-phosphate = 3-(imidazol-4-yl)-2-oxopropyl phosphate + H2O. It participates in amino-acid biosynthesis; L-histidine biosynthesis; L-histidine from 5-phospho-alpha-D-ribose 1-diphosphate: step 6/9. The protein is Imidazoleglycerol-phosphate dehydratase of Hyphomonas neptunium (strain ATCC 15444).